The primary structure comprises 320 residues: GMP reductase (320 aa).

The active-site Thioimidate intermediate is the Cys-174. NADP(+) is bound at residue 203 to 226 (IIADGGLRVNGDIAKSIRFGATMC).

This sequence belongs to the IMPDH/GMPR family. GuaC type 2 subfamily.

It catalyses the reaction IMP + NH4(+) + NADP(+) = GMP + NADPH + 2 H(+). Catalyzes the irreversible NADPH-dependent deamination of GMP to IMP. It functions in the conversion of nucleobase, nucleoside and nucleotide derivatives of G to A nucleotides, and in maintaining the intracellular balance of A and G nucleotides. The sequence is that of GMP reductase from Mesoplasma florum (strain ATCC 33453 / NBRC 100688 / NCTC 11704 / L1) (Acholeplasma florum).